Here is a 187-residue protein sequence, read N- to C-terminus: MDHYLDIRLRPDPEFPPAQLMSVLFGKLHQALVAQGGDRIGVSFPDLDESRSRLGERLRIHASADDLRALLARPWLEGLRDHLQFGEPAVVPHPTPYRQVSRVQAKSNPERLRRRLMRRHDLSEEEARKRIPDTVARALDLPFVTLRSQSTGQHFRLFIRHGPLQVTAEEGGFTCYGLSKGGFVPWF.

The active-site Proton acceptor is His29.

It belongs to the CRISPR-associated endoribonuclease Cas6 family. Cas6f/Csy4, subtype I-F/Ypest subfamily. In terms of assembly, part of the Csy ribonucleoprotein complex with a probable stoichiometry of Csy1(1),Csy2(1),Csy3(6),Cas6/Csy4(1)-crRNA(1). A Csy3(6),Cas6/Csy4(1)-crRNA(1) subcomplex is also formed. Metal-ion independent. is required as a cofactor.

In terms of biological role, CRISPR (clustered regularly interspaced short palindromic repeat) is an adaptive immune system that provides protection against mobile genetic elements (viruses, transposable elements and conjugative plasmids). CRISPR clusters contain sequences complementary to antecedent mobile elements and target invading nucleic acids. CRISPR clusters are transcribed and processed into CRISPR RNA (crRNA). Processes pre-crRNA into individual crRNA units. Absolutely required for crRNA production or stability. Upon expression in E.coli endonucleolytically processes pre-crRNA, although disruption and reconstitution experiments indicate that in situ other genes are also required for processing. Yields 5'-hydroxy and 3'-phosphate groups. The Csy ribonucleoprotein complex binds target ssDNA with high affinity but target dsDNA with much lower affinity. This chain is CRISPR-associated endonuclease Cas6/Csy4 (cas6f), found in Pseudomonas aeruginosa (strain UCBPP-PA14).